The following is a 407-amino-acid chain: 4-hydroxy-3-methylbut-2-en-1-yl diphosphate synthase (ferredoxin) (407 aa).

Residues C312, C315, C346, and E353 each contribute to the [4Fe-4S] cluster site.

Belongs to the IspG family. It depends on [4Fe-4S] cluster as a cofactor.

It catalyses the reaction (2E)-4-hydroxy-3-methylbut-2-enyl diphosphate + 2 oxidized [2Fe-2S]-[ferredoxin] + H2O = 2-C-methyl-D-erythritol 2,4-cyclic diphosphate + 2 reduced [2Fe-2S]-[ferredoxin] + H(+). Its pathway is isoprenoid biosynthesis; isopentenyl diphosphate biosynthesis via DXP pathway; isopentenyl diphosphate from 1-deoxy-D-xylulose 5-phosphate: step 5/6. Its function is as follows. Converts 2C-methyl-D-erythritol 2,4-cyclodiphosphate (ME-2,4cPP) into 1-hydroxy-2-methyl-2-(E)-butenyl 4-diphosphate. The protein is 4-hydroxy-3-methylbut-2-en-1-yl diphosphate synthase (ferredoxin) of Synechococcus elongatus (strain ATCC 33912 / PCC 7942 / FACHB-805) (Anacystis nidulans R2).